The primary structure comprises 466 residues: Argininosuccinate lyase (466 aa).

It belongs to the lyase 1 family. Argininosuccinate lyase subfamily.

Its subcellular location is the cytoplasm. The catalysed reaction is 2-(N(omega)-L-arginino)succinate = fumarate + L-arginine. The protein operates within amino-acid biosynthesis; L-arginine biosynthesis; L-arginine from L-ornithine and carbamoyl phosphate: step 3/3. The chain is Argininosuccinate lyase from Bartonella tribocorum (strain CIP 105476 / IBS 506).